A 678-amino-acid polypeptide reads, in one-letter code: Amino-acid acetyltransferase, mitochondrial (678 aa).

Residues Leu86–Leu111 form a disordered region. Over residues Thr96–Leu111 the composition is skewed to polar residues. The region spanning Asn499–Pro668 is the N-acetyltransferase domain.

It belongs to the acetyltransferase family.

It is found in the mitochondrion. It carries out the reaction L-glutamate + acetyl-CoA = N-acetyl-L-glutamate + CoA + H(+). Its pathway is amino-acid biosynthesis; L-arginine biosynthesis; N(2)-acetyl-L-ornithine from L-glutamate: step 1/4. Its function is as follows. N-acetylglutamate synthase involved in arginine biosynthesis. The chain is Amino-acid acetyltransferase, mitochondrial (arg2) from Aspergillus oryzae (strain ATCC 42149 / RIB 40) (Yellow koji mold).